We begin with the raw amino-acid sequence, 86 residues long: RNA-binding protein Hfq (86 aa).

The Sm domain occupies 9 to 68 (DPYLNTLRKEKVGVSIYLVNGIKLQGTIESFDQFVILLKNTVSQMVYKHAISTVVPVRPI).

It belongs to the Hfq family. Homohexamer.

In terms of biological role, RNA chaperone that binds small regulatory RNA (sRNAs) and mRNAs to facilitate mRNA translational regulation in response to envelope stress, environmental stress and changes in metabolite concentrations. Also binds with high specificity to tRNAs. This is RNA-binding protein Hfq from Pseudomonas fluorescens (strain ATCC BAA-477 / NRRL B-23932 / Pf-5).